The primary structure comprises 144 residues: Large ribosomal subunit protein uL13 (144 aa).

Belongs to the universal ribosomal protein uL13 family. Part of the 50S ribosomal subunit.

In terms of biological role, this protein is one of the early assembly proteins of the 50S ribosomal subunit, although it is not seen to bind rRNA by itself. It is important during the early stages of 50S assembly. In Herpetosiphon aurantiacus (strain ATCC 23779 / DSM 785 / 114-95), this protein is Large ribosomal subunit protein uL13.